Reading from the N-terminus, the 1866-residue chain is MGLPEYEADSEALLSQLTIEFTPGMTVSSLLAQVTTNDFHSAIEFFAAEKAVDIEGVHYNAYMQQIRKNPSLLRISVVAYAFHVSDMVAETMSYDVYEFLYKHYALFISNLVTRTLRFKELLLFCKQQFLEKMQASIVWAPELEQYLQVEGDAVAQGVSQLLYKMVTWVPTFVRGAVDWSVDAILVSFRKHFEKMVQEYVPMAHRVCSWLSQLWDKIVQWISQASETMGWFLDGCRDLMTWGIATLATCSALSLVEKLLVAMGFLVEPFGLSGIFLRTGVVAAACYNYGTNSKGFAEMMALLSLAANCVSTVIVGGFFPGEKDNAQSSPVILLEGLAGQMQNFCETTLVSVGKTCTAVNAISTCCGNLKALAGRILGMLRDFIWKTLGFETRFLADASLLFGEDVDGWLKAISDLRDQFIAKSYCSQDEMMQILVLLEKGRQMRKSGLSKGGISPAIINLILKGINDLEQLNRSCSVQGVRGVRKMPFTIFFQGKSRTGKSLLMSQVTKDFQDHYGLGGETVYSRNPCDQYWSGYRRQPFVLMDDFAAVVTEPSAEAQMINLISSAPYPLNMAGLEEKGICFDSQFVFVSTNFLEVSPEAKVRDDEAFKNRRHVIVQVSNDPAKAYDAANFASNQIYTILAWKDGRYNTVCVIEDYDELVAYLLTRSQQHAEEQEKNLANMMKSATFESHFKSLVEVLELGSMISAGFDIIRPEKLPSEAKEKRVLYSIPYNGEYCNALIDDNYNVTCWFGECVGNPEQLSKYSEKMLLGAYEFLLCSESLNVVIQAHLKEMVCPHHYDKELNFIGKIGETYYHNQMVSNIGSMQKWHRAILFGIGVLLGKEKEKTWYQVQVANVKQALYDMYTKEIRDWPMPIKVTCGIVLAAIGGSAFWKVFQQLVGSGNGPVLMGVAAGAFSAEPQSRKPNRFDMQQYRYNNVPLKRRVWADAQMSLDQSSVAIMSKCRANLVFGGTNLQIVMVPGRRFLACKHFFTHIKTKLRVEIVMDGRRYYHQFDPANIYDIPDSELVLYSHPSLEDVSHSCWDLFCWDPDKELPSVFGADFLSCKYNKFGGFYEAQYADIKVRTKKECLTIQSGNYVNKVSRYLEYEAPTIPEDCGSLVIAHIGGKHKIVGVHVAGIQGKIGCASLLPPLEPIAQAQGAEEYFDFLPAEENVSSGVAMVAGLKQGVYIPLPTKTALVETPSEWHLDTPCDKVPSILVPTDPRIPAQHEGYDPAKSGVSKYSQPMSALDPELLGEVANDVLELWHDCAVDWDDFGEVSLEEALNGCEGVEYMERIPLATSEGFPHILSRNGKEKGKRRFVQGDDCVVSLIPGTTVAKAYEELEASAHRFVPALVGIECPKDEKLPMRKVFDKPKTRCFTILPMEYNLVVRRKFLNFVRFIMANRHRLSCQVGINPYSMEWSRLAARMKEKGNDVLCCDYSSFDGLLSKQVMDVIASMINELCGGEDQLKNARRNLLMACCSRLAICKNTVWRVECGIPSGFPMTVIVNSIFNEILIRYHYKKLMREQQAPELMVQSFDKLIGLVTYGDDNLISVNAVVTPYFDGKKLKQSLAQGGVTITDGKDKTSLELPFRRLEECDFLKRTFVQRSSTIWDAPEDKASLWSQLHYVNCNNCEKEVAYLTNVVNVLRELYMHSPREATEFRRKVLKKVSWITSGDLPTLAQLQEFYEYQRQQGGADNNDTCDLLTSVDLLGPPLSFEKEAMHGCKVSEEIVTKNLAYYDFKRKGEDEVVFLFNTLYPQSSLPDGCHSVTWSQGSGRGGLPTQSWMSYNISRKDSNINKIIRTAVSSKKRVIFCARDNMVPVNIVALLCAVRNKLMPTAVSNATLVKVMENAKAFKFLPEEFNFAFSDV.

The region spanning 462 to 633 (LKGINDLEQL…KAYDAANFAS (172 aa)) is the SF3 helicase domain. Residue 494 to 501 (GKSRTGKS) coordinates ATP. A helical transmembrane segment spans residues 897–917 (LVGSGNGPVLMGVAAGAFSAE). Ser920 bears the O-(5'-phospho-RNA)-serine mark. Residues 945–1150 (DAQMSLDQSS…CASLLPPLEP (206 aa)) form the Peptidase C3 domain. Residues His987, Glu1023, and Cys1113 each act as for picornain 3C-like protease activity in the active site. A RdRp catalytic domain is found at 1429-1559 (NDVLCCDYSS…SVNAVVTPYF (131 aa)).

In terms of processing, specific enzymatic cleavages by picornain 3C-like protease in vivo yield mature proteins. Picornain 3C-like protease is autocatalytically processed. Uridylylated by the polymerase and is covalently linked to the 5'-end of genomic RNA. This uridylylated form acts as a nucleotide-peptide primer for the polymerase.

It localises to the host membrane. It is found in the host cytoplasm. The protein localises to the host perinuclear region. The protein resides in the host endoplasmic reticulum. It catalyses the reaction RNA(n) + a ribonucleoside 5'-triphosphate = RNA(n+1) + diphosphate. In terms of biological role, thiol protease that cleaves the RNA1 and RNA2 polyproteins. Functionally, plays a role in RNA replication. It is covalently linked to the 5'terminus of both viral single-stranded RNA1 and RNA2 molecules. Down-regulates the RNA1 polyprotein processing and enhances trans-cleavage of RNA2 polyproteins. The protease cofactor and the putative helicase seem to target the replication complexes to ER membranes. Their physical association causes the membrane rearrangement of host ER that may result in formation of the small membranous vesicles that are the site of viral RNA synthesis. Its function is as follows. The protease cofactor and the putative helicase seem to target the replication complexes to ER membranes. Their physical association causes the membrane rearrangement of host ER that may result in formation of the small membranous vesicles that are the site of viral RNA synthesis. In terms of biological role, replicates the viral genome. The chain is RNA1 polyprotein from Cajanus cajan (Pigeon pea).